We begin with the raw amino-acid sequence, 282 residues long: Acetyl-coenzyme A carboxylase carboxyl transferase subunit beta (282 aa).

In terms of domain architecture, CoA carboxyltransferase N-terminal spans 25–282 (LWTKCVSCGE…SSILTMLYRP (258 aa)). The Zn(2+) site is built by Cys29, Cys32, Cys48, and Cys51. The segment at 29-51 (CVSCGETIYTKDIENNLNVCPKC) adopts a C4-type zinc-finger fold.

It belongs to the AccD/PCCB family. In terms of assembly, acetyl-CoA carboxylase is a heterohexamer composed of biotin carboxyl carrier protein (AccB), biotin carboxylase (AccC) and two subunits each of ACCase subunit alpha (AccA) and ACCase subunit beta (AccD). It depends on Zn(2+) as a cofactor.

The protein localises to the cytoplasm. The enzyme catalyses N(6)-carboxybiotinyl-L-lysyl-[protein] + acetyl-CoA = N(6)-biotinyl-L-lysyl-[protein] + malonyl-CoA. The protein operates within lipid metabolism; malonyl-CoA biosynthesis; malonyl-CoA from acetyl-CoA: step 1/1. Component of the acetyl coenzyme A carboxylase (ACC) complex. Biotin carboxylase (BC) catalyzes the carboxylation of biotin on its carrier protein (BCCP) and then the CO(2) group is transferred by the transcarboxylase to acetyl-CoA to form malonyl-CoA. In Citrifermentans bemidjiense (strain ATCC BAA-1014 / DSM 16622 / JCM 12645 / Bem) (Geobacter bemidjiensis), this protein is Acetyl-coenzyme A carboxylase carboxyl transferase subunit beta.